Consider the following 121-residue polypeptide: Ribonuclease P protein component (121 aa).

The protein belongs to the RnpA family. As to quaternary structure, consists of a catalytic RNA component (M1 or rnpB) and a protein subunit.

The catalysed reaction is Endonucleolytic cleavage of RNA, removing 5'-extranucleotides from tRNA precursor.. Functionally, RNaseP catalyzes the removal of the 5'-leader sequence from pre-tRNA to produce the mature 5'-terminus. It can also cleave other RNA substrates such as 4.5S RNA. The protein component plays an auxiliary but essential role in vivo by binding to the 5'-leader sequence and broadening the substrate specificity of the ribozyme. In Desulfosudis oleivorans (strain DSM 6200 / JCM 39069 / Hxd3) (Desulfococcus oleovorans), this protein is Ribonuclease P protein component.